Here is a 403-residue protein sequence, read N- to C-terminus: Nuclear receptor subfamily 2 group F member 5 (403 aa).

The segment at 16–44 is disordered; the sequence is PGSQLQMCSQEPGGTPGTPSGSTPGNDAL. A DNA-binding region (nuclear receptor) is located at residues 51 to 126; that stretch reads NVDCMVCGDK…VGMRREAVQR (76 aa). NR C4-type zinc fingers lie at residues 54 to 74 and 90 to 114; these read CMVCGDKSSGKHYGQFTCEGC and CRGNRDCPIDQHHRNQCQYCRLKKC. The NR LBD domain maps to 152-378; the sequence is YLSGFISLLL…TLLRDMLLSG (227 aa).

Belongs to the nuclear hormone receptor family. NR2 subfamily.

It localises to the nucleus. Its function is as follows. Putative receptor that is required in photoreceptor cells precursors during eye development. In Danio rerio (Zebrafish), this protein is Nuclear receptor subfamily 2 group F member 5 (nr2f5).